A 118-amino-acid polypeptide reads, in one-letter code: Holo-[acyl-carrier-protein] synthase (118 aa).

Residues Asp-5 and Glu-51 each coordinate Mg(2+).

Belongs to the P-Pant transferase superfamily. AcpS family. It depends on Mg(2+) as a cofactor.

Its subcellular location is the cytoplasm. It catalyses the reaction apo-[ACP] + CoA = holo-[ACP] + adenosine 3',5'-bisphosphate + H(+). Transfers the 4'-phosphopantetheine moiety from coenzyme A to a Ser of acyl-carrier-protein. The sequence is that of Holo-[acyl-carrier-protein] synthase from Helicobacter pylori (strain P12).